A 196-amino-acid chain; its full sequence is MTPEEVLEEFRSAGALLQGHFILSSGLRSPTFLQKMTIFSDPARTERLCRALAEVITARFGRIDIVVSPAIGGIIPGYETARHLGAKAIFVERDPGGPFTLRRGFSIPAGSRAVIVEDIVTTGLSARECLASLKDEAGEVVGAACLIDRSGGRGEIGLPLVSLVTLDIPAYSPDALPPELAAIPPVKPGSRALPKP.

Residue 117–125 (EDIVTTGLS) participates in 5-phospho-alpha-D-ribose 1-diphosphate binding. Orotate contacts are provided by threonine 121 and arginine 149.

Belongs to the purine/pyrimidine phosphoribosyltransferase family. PyrE subfamily. As to quaternary structure, homodimer. It depends on Mg(2+) as a cofactor.

The enzyme catalyses orotidine 5'-phosphate + diphosphate = orotate + 5-phospho-alpha-D-ribose 1-diphosphate. It functions in the pathway pyrimidine metabolism; UMP biosynthesis via de novo pathway; UMP from orotate: step 1/2. Catalyzes the transfer of a ribosyl phosphate group from 5-phosphoribose 1-diphosphate to orotate, leading to the formation of orotidine monophosphate (OMP). The polypeptide is Orotate phosphoribosyltransferase (Methylorubrum populi (strain ATCC BAA-705 / NCIMB 13946 / BJ001) (Methylobacterium populi)).